We begin with the raw amino-acid sequence, 147 residues long: Prefoldin subunit alpha (147 aa).

The protein belongs to the prefoldin alpha subunit family. As to quaternary structure, heterohexamer of two alpha and four beta subunits.

The protein resides in the cytoplasm. Functionally, molecular chaperone capable of stabilizing a range of proteins. Seems to fulfill an ATP-independent, HSP70-like function in archaeal de novo protein folding. This Saccharolobus islandicus (strain L.S.2.15 / Lassen #1) (Sulfolobus islandicus) protein is Prefoldin subunit alpha.